We begin with the raw amino-acid sequence, 221 residues long: MPKYFCDYCDTYLTHDSPSVRKTHCNGRKHKENVRVYYQKWMEEQAQQLIDQTTAAFQAGKIPNNPFPNAAGQVGNEPGAKVLPPAILQAAAFQAGKIASNPFPTSQAGPGPQGGGTMIPPPPSLQGPGGPGSAPAPPRMPGPLLMTPPPGAAAPGMAPPGAPTLPQPARGPILSVGAVMGPRLCKHSYHINKALFLIKIHTLQKATQSQLVVYKTVEKSK.

The Matrin-type zinc finger occupies 4-36; it reads YFCDYCDTYLTHDSPSVRKTHCNGRKHKENVRV. The disordered stretch occupies residues 100–168; the sequence is SNPFPTSQAG…PPGAPTLPQP (69 aa). Residues 134-166 are compositionally biased toward pro residues; sequence APAPPRMPGPLLMTPPPGAAAPGMAPPGAPTLP.

The protein belongs to the U1 small nuclear ribonucleoprotein C family. U1 snRNP is composed of the 7 core Sm proteins B/B', D1, D2, D3, E, F and G that assemble in a heptameric protein ring on the Sm site of the small nuclear RNA to form the core snRNP, and at least 3 U1 snRNP-specific proteins U1-70K, U1-A and U1-C. U1-C interacts with U1 snRNA and the 5' splice-site region of the pre-mRNA.

The protein resides in the nucleus. In terms of biological role, component of the spliceosomal U1 snRNP, which is essential for recognition of the pre-mRNA 5' splice-site and the subsequent assembly of the spliceosome. U1-C is directly involved in initial 5' splice-site recognition for both constitutive and regulated alternative splicing. The interaction with the 5' splice-site seems to precede base-pairing between the pre-mRNA and the U1 snRNA. Stimulates commitment or early (E) complex formation by stabilizing the base pairing of the 5' end of the U1 snRNA and the 5' splice-site region. This is U1 small nuclear ribonucleoprotein C from Branchiostoma floridae (Florida lancelet).